The sequence spans 246 residues: MKYDIIGDIHGCFQEFQDLTKKLGYNWNSDLPIHPDQRKLAFVGDITDRGPHSLRMIEIVWELVINKKVAYYAPGNHCNKLYRFFLGRNVTIAHGLETTVAEYEALPSHQQNMIKEKFITLYEQSPLYHVLDEKRLIVCHAGIRQDYIGRKDKKVQTFVLYGDITGEKHADGSPVRRDWAKEYKGTSWIVYGHTPVKEPRFVNHTVNIDTGAVFGGKLTGLRYPEMEIVSVPSSLPFVPEKFRPIS.

The protein belongs to the PrpE family. Ni(2+) is required as a cofactor.

The catalysed reaction is P(1),P(4)-bis(5'-guanosyl) tetraphosphate + H2O = GMP + GTP + 2 H(+). Functionally, asymmetrically hydrolyzes Ap4p to yield AMP and ATP. This is Bis(5'-nucleosyl)-tetraphosphatase PrpE [asymmetrical] from Bacillus cereus (strain Q1).